Here is a 253-residue protein sequence, read N- to C-terminus: Imidazole glycerol phosphate synthase subunit HisF (253 aa).

Catalysis depends on residues D11 and D130.

The protein belongs to the HisA/HisF family. In terms of assembly, heterodimer of HisH and HisF.

The protein resides in the cytoplasm. It catalyses the reaction 5-[(5-phospho-1-deoxy-D-ribulos-1-ylimino)methylamino]-1-(5-phospho-beta-D-ribosyl)imidazole-4-carboxamide + L-glutamine = D-erythro-1-(imidazol-4-yl)glycerol 3-phosphate + 5-amino-1-(5-phospho-beta-D-ribosyl)imidazole-4-carboxamide + L-glutamate + H(+). The protein operates within amino-acid biosynthesis; L-histidine biosynthesis; L-histidine from 5-phospho-alpha-D-ribose 1-diphosphate: step 5/9. In terms of biological role, IGPS catalyzes the conversion of PRFAR and glutamine to IGP, AICAR and glutamate. The HisF subunit catalyzes the cyclization activity that produces IGP and AICAR from PRFAR using the ammonia provided by the HisH subunit. The polypeptide is Imidazole glycerol phosphate synthase subunit HisF (Clostridium botulinum (strain Alaska E43 / Type E3)).